Reading from the N-terminus, the 883-residue chain is Valine--tRNA ligase (883 aa).

The short motif at 46–56 is the 'HIGH' region element; it reads PNVTGKLHLGH. A 'KMSKS' region motif is present at residues 520–524; the sequence is KMSKS. Lysine 523 contributes to the ATP binding site. The stretch at 809–844 forms a coiled coil; it reads LADLLNVEEELARLEKELAKWQKELDMVGKKLSNER.

The protein belongs to the class-I aminoacyl-tRNA synthetase family. ValS type 1 subfamily. As to quaternary structure, monomer.

The protein resides in the cytoplasm. It catalyses the reaction tRNA(Val) + L-valine + ATP = L-valyl-tRNA(Val) + AMP + diphosphate. In terms of biological role, catalyzes the attachment of valine to tRNA(Val). As ValRS can inadvertently accommodate and process structurally similar amino acids such as threonine, to avoid such errors, it has a 'posttransfer' editing activity that hydrolyzes mischarged Thr-tRNA(Val) in a tRNA-dependent manner. In Streptococcus agalactiae serotype V (strain ATCC BAA-611 / 2603 V/R), this protein is Valine--tRNA ligase.